The chain runs to 491 residues: Blue-light-activated histidine kinase (491 aa).

Residues 19–92 (EANPFTAAVE…EIIHSALEAE (74 aa)) form the PAS 1 domain. Cys-69 is modified (S-4a-FMN cysteine). The 55-residue stretch at 93–147 (QSVEIDILNYKKSGEPFWNRLHISPVKTENGELHHFVSSQLDVTLELGKLVELEK) folds into the PAC domain. One can recognise a PAS 2 domain in the interval 159 to 230 (SSDQLQYIVE…QRSQESFATG (72 aa)). The tract at residues 286–368 (EISHRFKNSM…GHRIRTSGPE (83 aa)) is HWE histidine kinase domain. Position 289 is a phosphohistidine; by autocatalysis (His-289).

Post-translationally, FMN binds covalently to cysteine after exposure to blue light and this bond is spontaneously broken in the dark.

The enzyme catalyses ATP + protein L-histidine = ADP + protein N-phospho-L-histidine.. Photosensitive kinase that is involved in increased bacterial virulence upon exposure to light. The sequence is that of Blue-light-activated histidine kinase from Brucella anthropi (strain ATCC 49188 / DSM 6882 / CCUG 24695 / JCM 21032 / LMG 3331 / NBRC 15819 / NCTC 12168 / Alc 37) (Ochrobactrum anthropi).